The following is a 103-amino-acid chain: Histone H4, minor (103 aa).

Residues M1–K12 show a composition bias toward gly residues. The segment at M1–G29 is disordered. 4 positions are modified to N6-acetyllysine: K5, K8, K12, and K16. The span at G14–N23 shows a compositional bias: basic residues. The DNA-binding element occupies K16–K21.

Belongs to the histone H4 family. The nucleosome is a histone octamer containing two molecules each of H2A, H2B, H3 and H4 assembled in one H3-H4 heterotetramer and two H2A-H2B heterodimers. The octamer wraps approximately 147 bp of DNA.

The protein resides in the nucleus. Its subcellular location is the chromosome. In terms of biological role, core component of nucleosome. Nucleosomes wrap and compact DNA into chromatin, limiting DNA accessibility to the cellular machineries which require DNA as a template. Histones thereby play a central role in transcription regulation, DNA repair, DNA replication and chromosomal stability. DNA accessibility is regulated via a complex set of post-translational modifications of histones, also called histone code, and nucleosome remodeling. This Tetrahymena pyriformis protein is Histone H4, minor.